The primary structure comprises 376 residues: NIF3-like protein 1 (376 aa).

Lysine 108 bears the N6-acetyllysine mark. The interval 243–376 is mediates interaction with COPS2; the sequence is LLLHTGMGRL…ETDRDPLRVV (134 aa). At threonine 254 the chain carries Phosphothreonine. Serine 258 is modified (phosphoserine).

It belongs to the GTP cyclohydrolase I type 2/NIF3 family. Homodimer. Interacts with COPS2. Interacts with THOC7. Ubiquitous. Detected in all tissues tested with higher expression in cerebellum, heart and kidney and to a lower level in cerebrum, lung, liver, spleen and muscle.

The protein localises to the cytoplasm. It is found in the nucleus. Its function is as follows. May function as a transcriptional corepressor through its interaction with COPS2, negatively regulating the expression of genes involved in neuronal differentiation. In Mus musculus (Mouse), this protein is NIF3-like protein 1.